The following is a 201-amino-acid chain: 3-isopropylmalate dehydratase small subunit (201 aa).

Belongs to the LeuD family. LeuD type 1 subfamily. In terms of assembly, heterodimer of LeuC and LeuD.

The catalysed reaction is (2R,3S)-3-isopropylmalate = (2S)-2-isopropylmalate. It functions in the pathway amino-acid biosynthesis; L-leucine biosynthesis; L-leucine from 3-methyl-2-oxobutanoate: step 2/4. Functionally, catalyzes the isomerization between 2-isopropylmalate and 3-isopropylmalate, via the formation of 2-isopropylmaleate. This Shewanella frigidimarina (strain NCIMB 400) protein is 3-isopropylmalate dehydratase small subunit.